The sequence spans 90 residues: Small ribosomal subunit protein uS15 (90 aa).

It belongs to the universal ribosomal protein uS15 family. In terms of assembly, part of the 30S ribosomal subunit. Forms a bridge to the 50S subunit in the 70S ribosome, contacting the 23S rRNA.

Functionally, one of the primary rRNA binding proteins, it binds directly to 16S rRNA where it helps nucleate assembly of the platform of the 30S subunit by binding and bridging several RNA helices of the 16S rRNA. In terms of biological role, forms an intersubunit bridge (bridge B4) with the 23S rRNA of the 50S subunit in the ribosome. The protein is Small ribosomal subunit protein uS15 of Campylobacter concisus (strain 13826).